The primary structure comprises 340 residues: Flavonoid 7-O-methyltransferase 2 (340 aa).

Aspartate 207 is a binding site for S-adenosyl-L-methionine. Catalysis depends on histidine 245, which acts as the Proton acceptor.

This sequence belongs to the class I-like SAM-binding methyltransferase superfamily. Cation-independent O-methyltransferase family. Homodimer. As to expression, expressed in leaves.

The catalysed reaction is scutellarein 4'-methyl ether + S-adenosyl-L-methionine = ladanein + S-adenosyl-L-homocysteine. It carries out the reaction acacetin + S-adenosyl-L-methionine = apigenin 4',7-dimethyl ether + S-adenosyl-L-homocysteine. It catalyses the reaction diosmetin + S-adenosyl-L-methionine = luteolin 4',7-dimethyl ether + S-adenosyl-L-homocysteine. The enzyme catalyses chrysoeriol + S-adenosyl-L-methionine = velutin + S-adenosyl-L-homocysteine. The catalysed reaction is (2S)-naringenin + S-adenosyl-L-methionine = (2S)-sakuranetin + S-adenosyl-L-homocysteine + H(+). It carries out the reaction apigenin + S-adenosyl-L-methionine = genkwanin + S-adenosyl-L-homocysteine + H(+). It catalyses the reaction luteolin + S-adenosyl-L-methionine = luteolin 7-methyl ether + S-adenosyl-L-homocysteine + H(+). The enzyme catalyses scutellarein + S-adenosyl-L-methionine = scutellarein 7-methyl ether + S-adenosyl-L-homocysteine. It participates in flavonoid metabolism. Its function is as follows. Flavonoid 7-O-methyltransferase involved in the biosynthesis of polymethoxylated flavonoids natural products such as nevadensin and salvigenin, aroma compounds which contribute to the flavor of sweet basil, and exhibit pharmacological activities such as anti-allergic, anti-oxidant, antibacterial, anti-proliferative, and anti-inflammatory effects. Catalyzes S-adenosylmethionine-dependent regioselective 7-O-methylation of flavonoids; active on various hydroxylated flavonoid substrates, including apigenin (API) and luteolin (LUT), and, with a lower efficiency, scutellarein (SCU), naringenin (NAR), chrysoeriol (CHRYS), diosmetin (DIOS), acacetin (ACA) and scutellarein-7-methyl ether (SCU7Me). The chain is Flavonoid 7-O-methyltransferase 2 from Ocimum basilicum (Sweet basil).